We begin with the raw amino-acid sequence, 692 residues long: DNA repair protein RAD34 (692 aa).

Residues 1–38 form a disordered region; it reads MAKRLLESSQNDQANRKNSKIEKKEVSFYEEEETDDSF. Positions 28–38 are enriched in acidic residues; sequence FYEEEETDDSF.

Belongs to the XPC family.

The protein localises to the nucleus. Functionally, involved in nucleotide excision repair (NER) of damaged ribosomal DNA (rDNA). Required for the repair of the RNA polymerase I-transcribed strand of rDNA. The polypeptide is DNA repair protein RAD34 (RAD34) (Saccharomyces cerevisiae (strain ATCC 204508 / S288c) (Baker's yeast)).